Consider the following 50-residue polypeptide: Small ribosomal subunit protein eS31 (50 aa).

The Zn(2+) site is built by Cys-22, Cys-25, Cys-40, and Cys-43. The segment at 22 to 43 (CPRCGPGVFMADHGDRWACGKC) adopts a C4-type zinc-finger fold.

It belongs to the eukaryotic ribosomal protein eS31 family. In terms of assembly, part of the 30S ribosomal subunit. Requires Zn(2+) as cofactor.

The polypeptide is Small ribosomal subunit protein eS31 (Pyrococcus furiosus (strain ATCC 43587 / DSM 3638 / JCM 8422 / Vc1)).